A 366-amino-acid polypeptide reads, in one-letter code: Spermine synthase (366 aa).

Ala2 bears the N-acetylalanine mark. Position 57 is a phosphoserine (Ser57). Residues 122 to 362 (RYWPTADGRL…ELWVFYTVWK (241 aa)) enclose the PABS domain. Residue Gln148 participates in S-adenosyl 3-(methylsulfanyl)propylamine binding. Residues Tyr177 and Asp201 each contribute to the spermidine site. S-adenosyl 3-(methylsulfanyl)propylamine-binding positions include Glu220 and 255–256 (DC). Asp276 acts as the Proton acceptor in catalysis. Spermidine contacts are provided by Tyr351 and Glu353.

It belongs to the spermidine/spermine synthase family. In terms of assembly, homodimer. Dimerization is mediated through the N-terminal domain and seems to be required for activity as deletion of the N-terminal domain causes complete loss of activity.

It catalyses the reaction S-adenosyl 3-(methylsulfanyl)propylamine + spermidine = spermine + S-methyl-5'-thioadenosine + H(+). The protein operates within amine and polyamine biosynthesis; spermine biosynthesis; spermine from spermidine: step 1/1. In terms of biological role, catalyzes the production of spermine from spermidine and decarboxylated S-adenosylmethionine (dcSAM). Required for normal viability, growth and fertility. The sequence is that of Spermine synthase (Sms) from Mus musculus (Mouse).